Consider the following 1053-residue polypeptide: Integrin alpha-3 (1053 aa).

A signal peptide spans Met1–Ala32. At Phe33 to Glu993 the chain is on the extracellular side. 7 FG-GAP repeats span residues Arg38–Cys103, Glu110–Leu171, Cys185–Ser235, Glu236–Leu293, Gln294–Pro355, Gln357–Arg412, and Gln416–Pro478. N-linked (GlcNAc...) asparagine glycosylation is present at Asn86. 3 disulfide bridges follow: Cys94–Cys103, Cys140–Cys162, and Cys185–Cys197. Cystine bridges form between Cys486-Cys491 and Cys497-Cys551. Asn501, Asn512, Asn574, and Asn606 each carry an N-linked (GlcNAc...) asparagine glycan. Cys616 and Cys622 form a disulfide bridge. Residues Asn657, Asn699, Asn843, and Asn859 are each glycosylated (N-linked (GlcNAc...) asparagine). A disulfide bond links Cys695 and Cys704. Cystine bridges form between Cys848-Cys906 and Cys913-Cys918. The disordered stretch occupies residues Pro865–Val890. N-linked (GlcNAc...) asparagine glycosylation is found at Asn925, Asn928, Asn937, and Asn971. The helical transmembrane segment at Leu994–Phe1021 threads the bilayer. A lipid anchor (S-palmitoyl cysteine) is attached at Cys1018. Over Lys1022 to Tyr1053 the chain is Cytoplasmic.

The protein belongs to the integrin alpha chain family. In terms of assembly, heterodimer of an alpha and a beta subunit. The alpha subunit is composed of a heavy and a light chain linked by a disulfide bond. Alpha-3 associates with beta-1. Interacts with HPS5. Interacts with FAP (seprase); the interaction occurs at the cell surface of invadopodia membrane in a collagen-dependent manner. Isoform 1 and isoform 2 are expressed in heart and brain. Only isoform 1 is detected in lung.

It localises to the cell membrane. It is found in the cell projection. Its subcellular location is the invadopodium membrane. The protein localises to the filopodium membrane. In terms of biological role, integrin alpha-3/beta-1 is a receptor for fibronectin, laminin, collagen, epiligrin, thrombospondin and CSPG4. Integrin alpha-3/beta-1 provides a docking site for FAP (seprase) at invadopodia plasma membranes in a collagen-dependent manner and hence may participate in the adhesion, formation of invadopodia and matrix degradation processes, promoting cell invasion. Alpha-3/beta-1 may mediate with LGALS3 the stimulation by CSPG4 of endothelial cells migration. The protein is Integrin alpha-3 (Itga3) of Mus musculus (Mouse).